We begin with the raw amino-acid sequence, 179 residues long: Large ribosomal subunit protein uL5 (179 aa).

The protein belongs to the universal ribosomal protein uL5 family. In terms of assembly, part of the 50S ribosomal subunit; part of the 5S rRNA/L5/L18/L25 subcomplex. Contacts the 5S rRNA and the P site tRNA. Forms a bridge to the 30S subunit in the 70S ribosome.

Its function is as follows. This is one of the proteins that bind and probably mediate the attachment of the 5S RNA into the large ribosomal subunit, where it forms part of the central protuberance. In the 70S ribosome it contacts protein S13 of the 30S subunit (bridge B1b), connecting the 2 subunits; this bridge is implicated in subunit movement. Contacts the P site tRNA; the 5S rRNA and some of its associated proteins might help stabilize positioning of ribosome-bound tRNAs. The chain is Large ribosomal subunit protein uL5 from Yersinia pestis.